Here is a 601-residue protein sequence, read N- to C-terminus: Vesicular glutamate transporter 3 (601 aa).

At 1 to 89 (MPFKAFDTFK…CSCCGIPKRY (89 aa)) the chain is on the cytoplasmic side. The chain crosses the membrane as a helical span at residues 90–110 (IIAVMSGLGFCISFGIRCNLG). Over 111 to 143 (VAIVEMVNNSTVYVDGKPEIQTAQFNWDPETVG) the chain is Vesicular. Residue asparagine 119 is glycosylated (N-linked (GlcNAc...) asparagine). A helical membrane pass occupies residues 144-164 (LIHGSFFWGYIVTQIPGGFIS). At 165-166 (NK) the chain is on the cytoplasmic side. A helical membrane pass occupies residues 167 to 187 (FAASRVFGAAIFLTSTLNMFI). Over 188–195 (PSAARVHY) the chain is Vesicular. The helical transmembrane segment at 196 to 216 (GCVMGVRILQGLVEGVTYPAC) threads the bilayer. Residues 217–234 (HGMWSKWAPPLERSRLAT) are Cytoplasmic-facing. Residues 235-255 (TSFCGSYAGAVVAMPLAGVLV) form a helical membrane-spanning segment. Topologically, residues 256 to 262 (QYIGWAS) are vesicular. The helical transmembrane segment at 263-283 (VFYIYGMFGIIWYMFWLLQAY) threads the bilayer. The Cytoplasmic portion of the chain corresponds to 284 to 327 (ECPAAHPTISNAERTYIETSIGEGANLASLSKFNTPWRRFFTSL). A helical membrane pass occupies residues 328-348 (PVYAIIVANFCRSWTFYLLLI). The Vesicular segment spans residues 349–366 (SQPAYFEEVFGFAISKVG). Residues 367 to 387 (LLSAVPHMVMTIVVPIGGQLA) traverse the membrane as a helical segment. Residues 388 to 403 (DYLRSRKILTTTAVRK) are Cytoplasmic-facing. Residues 404-424 (IMNCGGFGMEATLLLVVGFSH) traverse the membrane as a helical segment. Over 425-426 (TK) the chain is Vesicular. Residues 427–447 (GVAISFLVLAVGFSGFAISGF) form a helical membrane-spanning segment. Topologically, residues 448–460 (NVNHLDIAPRYAS) are cytoplasmic. A helical transmembrane segment spans residues 461–481 (ILMGISNGVGTLSGMVCPLIV). The Vesicular portion of the chain corresponds to 482–494 (GAMTKHKTREEWQ). A helical membrane pass occupies residues 495-515 (NVFLIAALVHYSGVIFYGVFA). The Cytoplasmic segment spans residues 516–598 (SGEKQDWADP…LSYQAEGDFS (83 aa)). Positions 576-601 (RQQRESAFDGEEPLSYQAEGDFSETS) are disordered.

This sequence belongs to the major facilitator superfamily. Sodium/anion cotransporter family. VGLUT subfamily. Expressed in restricted areas of the brain. Highest expression is found in the neurons of the basal forebrain, the hippocampal formation, and the majority of the neurons of the mesencephalic raphe nuclei. Expressed in inner hair cells of the ear.

It localises to the cytoplasmic vesicle. It is found in the secretory vesicle. The protein resides in the synaptic vesicle membrane. The protein localises to the cell membrane. Its subcellular location is the synapse. It localises to the synaptosome. The catalysed reaction is L-glutamate(out) = L-glutamate(in). The enzyme catalyses 3 Na(+)(out) + phosphate(out) = 3 Na(+)(in) + phosphate(in). It catalyses the reaction chloride(in) = chloride(out). The L-glutamate uniporter activity exhibits a biphasic dependence on chloride concentration. Chloride channel activity is allosterically activated by lumenal H(+) and Cl(-) leading to synaptic vesicles acidification. The L-glutamate transport activity is allosterically activated by lumenal H(+) and Cl(-), preventing non-vesicular L-glutamate release. Its function is as follows. Multifunctional transporter that transports L-glutamate as well as multiple ions such as chloride, sodium and phosphate. At the synaptic vesicle membrane, mainly functions as an uniporter that mediates the uptake of L-glutamate into synaptic vesicles at presynaptic nerve terminals of excitatory neural cells. The L-glutamate uniporter activity is electrogenic and is driven by the proton electrochemical gradient, mainly by the electrical gradient established by the vacuolar H(+)-ATPase across the synaptic vesicle membrane. In addition, functions as a chloride channel that allows a chloride permeation through the synaptic vesicle membrane that affects the proton electrochemical gradient and promotes synaptic vesicles acidification. At the plasma membrane, following exocytosis, functions as a symporter of Na(+) and phosphate from the extracellular space to the cytoplasm allowing synaptic phosphate homeostasis regulation. The symporter activity is electrogenic. Moreover, operates synergistically with SLC18A3/VACHT under a constant H(+) gradient, thereby allowing striatal vesicular acetylcholine uptake. The chain is Vesicular glutamate transporter 3 from Mus musculus (Mouse).